We begin with the raw amino-acid sequence, 158 residues long: Small ribosomal subunit protein uS9 (158 aa).

This sequence belongs to the universal ribosomal protein uS9 family.

The sequence is that of Small ribosomal subunit protein uS9 from Nitrobacter winogradskyi (strain ATCC 25391 / DSM 10237 / CIP 104748 / NCIMB 11846 / Nb-255).